Reading from the N-terminus, the 350-residue chain is D-alanine--D-alanine ligase (350 aa).

One can recognise an ATP-grasp domain in the interval 138-346 (KSAFSSAGLS…LEQLVHKLIQ (209 aa)). 173–228 (ERELNYPCFVKPANLGSSVGISKVRSRQELEAGLEQAAALDPRLVVEQGVNAREVE) contributes to the ATP binding site. Mg(2+) contacts are provided by aspartate 299, glutamate 313, and asparagine 315.

It belongs to the D-alanine--D-alanine ligase family. It depends on Mg(2+) as a cofactor. Mn(2+) serves as cofactor.

The protein resides in the cytoplasm. The enzyme catalyses 2 D-alanine + ATP = D-alanyl-D-alanine + ADP + phosphate + H(+). It functions in the pathway cell wall biogenesis; peptidoglycan biosynthesis. Cell wall formation. The chain is D-alanine--D-alanine ligase from Synechococcus sp. (strain CC9605).